The following is a 348-amino-acid chain: UPF0324 membrane protein BH02290 (348 aa).

11 consecutive transmembrane segments (helical) span residues 13 to 35 (AFLNDFSPGILACLIISVLAYGL), 45 to 67 (QAWLESLVLAILLGSITGSCFTL), 74 to 96 (GITFCAKTLLEIAIVLLGASISV), 106 to 128 (LLASIIFVIFVTLILSFTIGRLF), 135 to 157 (AMLVACGNAICGNSAIVAVAPVI), 167 to 189 (SIAFTALLGVLIILFLPFLHPFL), 196 to 218 (YGVLSGMVVYAVPQVLAATASVS), 223 to 245 (QIATVVKLVRVLMLGPLIFALSI), 257 to 275 (LHTLVPWFIIGFIFMMLIR), 285 to 307 (LIPIRFIAQLFTVISMAALGLGV), and 319 to 341 (VILASTCSILILGVCSLIMIQLN).

Belongs to the UPF0324 family.

It localises to the cell membrane. This Bartonella henselae (strain ATCC 49882 / DSM 28221 / CCUG 30454 / Houston 1) (Rochalimaea henselae) protein is UPF0324 membrane protein BH02290.